Here is a 388-residue protein sequence, read N- to C-terminus: S-adenosylmethionine synthase (388 aa).

ATP is bound at residue His-16. Asp-18 is a binding site for Mg(2+). K(+) is bound at residue Glu-44. Residues Glu-57 and Gln-100 each coordinate L-methionine. The interval Gln-100 to Glu-110 is flexible loop. ATP-binding positions include Asp-167–Lys-169, Arg-233–Phe-234, Asp-242, Arg-248–Lys-249, and Lys-269. Asp-242 is an L-methionine binding site. Lys-273 serves as a coordination point for L-methionine.

Belongs to the AdoMet synthase family. In terms of assembly, homotetramer; dimer of dimers. Mg(2+) serves as cofactor. K(+) is required as a cofactor.

Its subcellular location is the cytoplasm. It carries out the reaction L-methionine + ATP + H2O = S-adenosyl-L-methionine + phosphate + diphosphate. It functions in the pathway amino-acid biosynthesis; S-adenosyl-L-methionine biosynthesis; S-adenosyl-L-methionine from L-methionine: step 1/1. Functionally, catalyzes the formation of S-adenosylmethionine (AdoMet) from methionine and ATP. The overall synthetic reaction is composed of two sequential steps, AdoMet formation and the subsequent tripolyphosphate hydrolysis which occurs prior to release of AdoMet from the enzyme. In Desulfosudis oleivorans (strain DSM 6200 / JCM 39069 / Hxd3) (Desulfococcus oleovorans), this protein is S-adenosylmethionine synthase.